Consider the following 1400-residue polypeptide: DNA-directed RNA polymerase subunit beta' (1400 aa).

Zn(2+) contacts are provided by Cys-71, Cys-73, Cys-86, and Cys-89. Mg(2+) is bound by residues Asp-462, Asp-464, and Asp-466. Zn(2+)-binding residues include Cys-811, Cys-885, Cys-892, and Cys-895.

Belongs to the RNA polymerase beta' chain family. The RNAP catalytic core consists of 2 alpha, 1 beta, 1 beta' and 1 omega subunit. When a sigma factor is associated with the core the holoenzyme is formed, which can initiate transcription. Requires Mg(2+) as cofactor. It depends on Zn(2+) as a cofactor.

The catalysed reaction is RNA(n) + a ribonucleoside 5'-triphosphate = RNA(n+1) + diphosphate. DNA-dependent RNA polymerase catalyzes the transcription of DNA into RNA using the four ribonucleoside triphosphates as substrates. The chain is DNA-directed RNA polymerase subunit beta' from Brucella abortus (strain S19).